We begin with the raw amino-acid sequence, 115 residues long: Protein Wnt-2 (115 aa).

Ser-1 carries the O-palmitoleoyl serine; by PORCN lipid modification. Cys-81 and Cys-96 are oxidised to a cystine. A glycan (N-linked (GlcNAc...) asparagine) is linked at Asn-82.

It belongs to the Wnt family. Palmitoleoylation is required for efficient binding to frizzled receptors. Depalmitoleoylation leads to Wnt signaling pathway inhibition.

It localises to the secreted. The protein localises to the extracellular space. The protein resides in the extracellular matrix. Ligand for members of the frizzled family of seven transmembrane receptors. Probable developmental protein. May be a signaling molecule which affects the development of discrete regions of tissues. Is likely to signal over only few cell diameters. The sequence is that of Protein Wnt-2 (WNT-2) from Strongylocentrotus purpuratus (Purple sea urchin).